The following is a 651-amino-acid chain: DNA topoisomerase 3 (651 aa).

The Toprim domain maps to M1–I134. E7, D103, and D105 together coordinate Mg(2+). One can recognise a Topo IA-type catalytic domain in the interval F155–V612. The interval S194–Q199 is interaction with DNA. Catalysis depends on Y337, which acts as the O-(5'-phospho-DNA)-tyrosine intermediate. Residues S631–D651 form a disordered region.

Belongs to the type IA topoisomerase family. Mg(2+) is required as a cofactor.

It catalyses the reaction ATP-independent breakage of single-stranded DNA, followed by passage and rejoining.. Releases the supercoiling and torsional tension of DNA, which is introduced during the DNA replication and transcription, by transiently cleaving and rejoining one strand of the DNA duplex. Introduces a single-strand break via transesterification at a target site in duplex DNA. The scissile phosphodiester is attacked by the catalytic tyrosine of the enzyme, resulting in the formation of a DNA-(5'-phosphotyrosyl)-enzyme intermediate and the expulsion of a 3'-OH DNA strand. The free DNA strand then undergoes passage around the unbroken strand, thus removing DNA supercoils. Finally, in the religation step, the DNA 3'-OH attacks the covalent intermediate to expel the active-site tyrosine and restore the DNA phosphodiester backbone. The sequence is that of DNA topoisomerase 3 from Haemophilus influenzae (strain ATCC 51907 / DSM 11121 / KW20 / Rd).